A 391-amino-acid chain; its full sequence is DNA replication and repair protein RecF (391 aa).

30-37 (GLNGQGKT) lines the ATP pocket.

The protein belongs to the RecF family.

It localises to the cytoplasm. Functionally, the RecF protein is involved in DNA metabolism; it is required for DNA replication and normal SOS inducibility. RecF binds preferentially to single-stranded, linear DNA. It also seems to bind ATP. This chain is DNA replication and repair protein RecF, found in Kineococcus radiotolerans (strain ATCC BAA-149 / DSM 14245 / SRS30216).